The primary structure comprises 92 residues: UPF0250 protein Smlt4048 (92 aa).

This sequence belongs to the UPF0250 family.

In Stenotrophomonas maltophilia (strain K279a), this protein is UPF0250 protein Smlt4048.